An 877-amino-acid polypeptide reads, in one-letter code: DNA mismatch repair protein MutS (877 aa).

627 to 634 (GPNMAGKS) is a binding site for ATP.

Belongs to the DNA mismatch repair MutS family.

Functionally, this protein is involved in the repair of mismatches in DNA. It is possible that it carries out the mismatch recognition step. This protein has a weak ATPase activity. This chain is DNA mismatch repair protein MutS, found in Dinoroseobacter shibae (strain DSM 16493 / NCIMB 14021 / DFL 12).